Reading from the N-terminus, the 98-residue chain is Aspartyl/glutamyl-tRNA(Asn/Gln) amidotransferase subunit C (98 aa).

This sequence belongs to the GatC family. In terms of assembly, heterotrimer of A, B and C subunits.

It catalyses the reaction L-glutamyl-tRNA(Gln) + L-glutamine + ATP + H2O = L-glutaminyl-tRNA(Gln) + L-glutamate + ADP + phosphate + H(+). It carries out the reaction L-aspartyl-tRNA(Asn) + L-glutamine + ATP + H2O = L-asparaginyl-tRNA(Asn) + L-glutamate + ADP + phosphate + 2 H(+). Its function is as follows. Allows the formation of correctly charged Asn-tRNA(Asn) or Gln-tRNA(Gln) through the transamidation of misacylated Asp-tRNA(Asn) or Glu-tRNA(Gln) in organisms which lack either or both of asparaginyl-tRNA or glutaminyl-tRNA synthetases. The reaction takes place in the presence of glutamine and ATP through an activated phospho-Asp-tRNA(Asn) or phospho-Glu-tRNA(Gln). The chain is Aspartyl/glutamyl-tRNA(Asn/Gln) amidotransferase subunit C from Gloeothece citriformis (strain PCC 7424) (Cyanothece sp. (strain PCC 7424)).